We begin with the raw amino-acid sequence, 242 residues long: 3-deoxy-manno-octulosonate cytidylyltransferase (242 aa).

It belongs to the KdsB family.

The protein resides in the cytoplasm. It carries out the reaction 3-deoxy-alpha-D-manno-oct-2-ulosonate + CTP = CMP-3-deoxy-beta-D-manno-octulosonate + diphosphate. Its pathway is nucleotide-sugar biosynthesis; CMP-3-deoxy-D-manno-octulosonate biosynthesis; CMP-3-deoxy-D-manno-octulosonate from 3-deoxy-D-manno-octulosonate and CTP: step 1/1. The protein operates within bacterial outer membrane biogenesis; lipopolysaccharide biosynthesis. Its function is as follows. Activates KDO (a required 8-carbon sugar) for incorporation into bacterial lipopolysaccharide in Gram-negative bacteria. This chain is 3-deoxy-manno-octulosonate cytidylyltransferase, found in Anaeromyxobacter sp. (strain K).